The chain runs to 446 residues: 3-phosphoshikimate 1-carboxyvinyltransferase (446 aa).

The interval 1 to 20 (MIMAKPLSSRRAAPLAGSAP) is disordered. 3-phosphoshikimate-binding residues include lysine 25, serine 26, and arginine 30. Phosphoenolpyruvate is bound at residue lysine 25. Phosphoenolpyruvate is bound by residues glycine 98 and arginine 126. 3-phosphoshikimate-binding residues include serine 171, glutamine 173, aspartate 324, and lysine 351. Glutamine 173 contacts phosphoenolpyruvate. Catalysis depends on aspartate 324, which acts as the Proton acceptor. 2 residues coordinate phosphoenolpyruvate: arginine 355 and arginine 399.

Belongs to the EPSP synthase family. Monomer.

Its subcellular location is the cytoplasm. It carries out the reaction 3-phosphoshikimate + phosphoenolpyruvate = 5-O-(1-carboxyvinyl)-3-phosphoshikimate + phosphate. It participates in metabolic intermediate biosynthesis; chorismate biosynthesis; chorismate from D-erythrose 4-phosphate and phosphoenolpyruvate: step 6/7. Catalyzes the transfer of the enolpyruvyl moiety of phosphoenolpyruvate (PEP) to the 5-hydroxyl of shikimate-3-phosphate (S3P) to produce enolpyruvyl shikimate-3-phosphate and inorganic phosphate. This is 3-phosphoshikimate 1-carboxyvinyltransferase from Paramagnetospirillum magneticum (strain ATCC 700264 / AMB-1) (Magnetospirillum magneticum).